The chain runs to 317 residues: Pantothenate kinase (317 aa).

Position 99–106 (99–106) interacts with ATP; it reads GSVSVGKS.

It belongs to the prokaryotic pantothenate kinase family.

It localises to the cytoplasm. It carries out the reaction (R)-pantothenate + ATP = (R)-4'-phosphopantothenate + ADP + H(+). Its pathway is cofactor biosynthesis; coenzyme A biosynthesis; CoA from (R)-pantothenate: step 1/5. This is Pantothenate kinase from Mannheimia succiniciproducens (strain KCTC 0769BP / MBEL55E).